Here is a 483-residue protein sequence, read N- to C-terminus: Glutamyl-tRNA(Gln) amidotransferase subunit A (483 aa).

Active-site charge relay system residues include Lys-77 and Ser-152. Ser-176 (acyl-ester intermediate) is an active-site residue.

It belongs to the amidase family. GatA subfamily. As to quaternary structure, heterotrimer of A, B and C subunits.

It catalyses the reaction L-glutamyl-tRNA(Gln) + L-glutamine + ATP + H2O = L-glutaminyl-tRNA(Gln) + L-glutamate + ADP + phosphate + H(+). Its function is as follows. Allows the formation of correctly charged Gln-tRNA(Gln) through the transamidation of misacylated Glu-tRNA(Gln) in organisms which lack glutaminyl-tRNA synthetase. The reaction takes place in the presence of glutamine and ATP through an activated gamma-phospho-Glu-tRNA(Gln). This Shouchella clausii (strain KSM-K16) (Alkalihalobacillus clausii) protein is Glutamyl-tRNA(Gln) amidotransferase subunit A.